The chain runs to 143 residues: MRLNTISPSKGAKHSSKRLGRGIGSGLGKTSGRGHKGQKARSGCSIHRGFEGGQTPLYRRLPKFGFTSCKATVTTEIRLADLSKLQDNLIDLKTLKKANIIPKKIKWVKIILTGDIKRAITVRSLRVSKGAKLAIEAAGGKIE.

A disordered region spans residues 1–48 (MRLNTISPSKGAKHSSKRLGRGIGSGLGKTSGRGHKGQKARSGCSIHR). A compositionally biased stretch (basic residues) spans 11 to 20 (GAKHSSKRLG). Residues 21 to 31 (RGIGSGLGKTS) show a composition bias toward gly residues.

This sequence belongs to the universal ribosomal protein uL15 family. Part of the 50S ribosomal subunit.

Binds to the 23S rRNA. In Baumannia cicadellinicola subsp. Homalodisca coagulata, this protein is Large ribosomal subunit protein uL15.